Reading from the N-terminus, the 96-residue chain is Large ribosomal subunit protein uL23 (96 aa).

Belongs to the universal ribosomal protein uL23 family. As to quaternary structure, part of the 50S ribosomal subunit. Contacts protein L29, and trigger factor when it is bound to the ribosome.

One of the early assembly proteins it binds 23S rRNA. One of the proteins that surrounds the polypeptide exit tunnel on the outside of the ribosome. Forms the main docking site for trigger factor binding to the ribosome. The polypeptide is Large ribosomal subunit protein uL23 (Onion yellows phytoplasma (strain OY-M)).